A 635-amino-acid chain; its full sequence is Threonine--tRNA ligase (635 aa).

The 61-residue stretch at 1-61 (MINISFPDGS…EHDCKLRILT (61 aa)) folds into the TGS domain. The segment at 242-533 (DHRKIGKELD…LIEEYAGKFP (292 aa)) is catalytic. The Zn(2+) site is built by Cys333, His384, and His510.

This sequence belongs to the class-II aminoacyl-tRNA synthetase family. In terms of assembly, homodimer. Zn(2+) is required as a cofactor.

It localises to the cytoplasm. It carries out the reaction tRNA(Thr) + L-threonine + ATP = L-threonyl-tRNA(Thr) + AMP + diphosphate + H(+). Its function is as follows. Catalyzes the attachment of threonine to tRNA(Thr) in a two-step reaction: L-threonine is first activated by ATP to form Thr-AMP and then transferred to the acceptor end of tRNA(Thr). Also edits incorrectly charged L-seryl-tRNA(Thr). This chain is Threonine--tRNA ligase, found in Rickettsia typhi (strain ATCC VR-144 / Wilmington).